The sequence spans 135 residues: NADPH-dependent 7-cyano-7-deazaguanine reductase (135 aa).

The active-site Thioimide intermediate is the Cys48. Residue Asp55 is the Proton donor of the active site. Substrate is bound by residues Ile70–Leu72 and His89–Glu90.

This sequence belongs to the GTP cyclohydrolase I family. QueF type 1 subfamily.

The protein localises to the cytoplasm. The catalysed reaction is 7-aminomethyl-7-carbaguanine + 2 NADP(+) = 7-cyano-7-deazaguanine + 2 NADPH + 3 H(+). It functions in the pathway tRNA modification; tRNA-queuosine biosynthesis. Functionally, catalyzes the NADPH-dependent reduction of 7-cyano-7-deazaguanine (preQ0) to 7-aminomethyl-7-deazaguanine (preQ1). In Prochlorococcus marinus (strain MIT 9313), this protein is NADPH-dependent 7-cyano-7-deazaguanine reductase.